A 360-amino-acid chain; its full sequence is Peptide chain release factor 1 (360 aa).

Gln-235 bears the N5-methylglutamine mark. Over residues 285-295 the composition is skewed to polar residues; sequence AQQASEASTRK. The segment at 285-305 is disordered; that stretch reads AQQASEASTRKSLIGSGDRSD.

Belongs to the prokaryotic/mitochondrial release factor family. Post-translationally, methylated by PrmC. Methylation increases the termination efficiency of RF1.

The protein localises to the cytoplasm. In terms of biological role, peptide chain release factor 1 directs the termination of translation in response to the peptide chain termination codons UAG and UAA. The chain is Peptide chain release factor 1 from Thiobacillus denitrificans (strain ATCC 25259 / T1).